The sequence spans 79 residues: Putative defensin-like protein 309 (79 aa).

An N-terminal signal peptide occupies residues 1-19 (MKILAFFIFVLLIFSCSSS). Disulfide bonds link Cys31–Cys50, Cys37–Cys55, and Cys41–Cys57.

The protein belongs to the DEFL family.

The protein localises to the secreted. This is Putative defensin-like protein 309 from Arabidopsis thaliana (Mouse-ear cress).